Reading from the N-terminus, the 145-residue chain is Brain and acute leukemia cytoplasmic protein (145 aa).

A lipid anchor (N-myristoyl glycine) is attached at G2. The S-palmitoyl cysteine moiety is linked to residue C3. An interaction with CAMK2A region spans residues 3-35; it reads CGGSRADAIEPRYYESWTRETESTWLTYTDSDA. Residues 36–113 are disordered; it reads LPSAAATDSG…GLWTTEAKRD (78 aa). Positions 83 to 106 are enriched in polar residues; sequence CGTQCPNSQSLSSGPLTQKQNGLW.

As to quaternary structure, interacts with CAMK2A. Post-translationally, palmitoylation and myristoylation target the protein to the lipid rafts. Predominantly expressed in the brain (at protein level). Within the brain, found in most of forebrain structures, including the cerebral cortex, hippocampal formation, olfactory bulb, anterior olfactory nuclei, piriform cortex, tenia tecta and amygdaloid nuclei. Not detected in glial cells.

It is found in the cytoplasm. Its subcellular location is the synapse. The protein localises to the synaptosome. The protein resides in the membrane raft. It localises to the postsynaptic density. Functionally, may play a synaptic role at the postsynaptic lipid rafts possibly through interaction with CAMK2A. This is Brain and acute leukemia cytoplasmic protein (Baalc) from Rattus norvegicus (Rat).